A 991-amino-acid chain; its full sequence is Glutamate receptor 1 (991 aa).

Positions 1–27 are cleaved as a signal peptide; it reads MHSRLKFLAYLHFICASSIFWPEFSSA. Residues 28 to 611 are Extracellular-facing; the sequence is QQQQQTVSLT…VFSFLNPLSQ (584 aa). Residues N67, N195, N208, and N281 are each glycosylated (N-linked (GlcNAc...) asparagine). Disordered stretches follow at residues 300 to 321 and 354 to 379; these read DSRK…GPNS and FRSN…NESS. Residues 308–318 show a composition bias toward polar residues; sequence SGQSQSQNAGG. Over residues 365–379 the composition is skewed to low complexity; sequence GGSSSSSATGTNESS. N-linked (GlcNAc...) asparagine glycans are attached at residues N376, N385, N426, N437, and N477. The chain crosses the membrane as a helical span at residues 612-632; the sequence is EIWISVILSYVGVSFVLYFVT. Over 633 to 710 the chain is Cytoplasmic; sequence RFPPYEWRIV…PSIAGRIAAA (78 aa). Residues 711–731 traverse the membrane as a helical segment; sequence VWWFFTIILISSYTANLAAFL. At 732–895 the chain is on the extracellular side; the sequence is TVERMVAPIK…STPNELSLSN (164 aa). A helical transmembrane segment spans residues 896–916; it reads VAGIYYILIGGLLLAVIVAIM. Residues 917–991 lie on the Cytoplasmic side of the membrane; the sequence is EFFCRNKTPQ…ASNVRYQYSM (75 aa).

The protein belongs to the glutamate-gated ion channel (TC 1.A.10.1) family. In terms of assembly, homooligomer. In terms of tissue distribution, central nervous system.

The protein resides in the cell membrane. The protein localises to the postsynaptic cell membrane. Its function is as follows. Receptor for glutamate. L-glutamate acts as an excitatory neurotransmitter at many synapses in the central nervous system. The postsynaptic actions of Glu are mediated by a variety of receptors that are named according to their selective agonists. Forms ligand-gated ion channels which are activated by kainate. This Drosophila melanogaster (Fruit fly) protein is Glutamate receptor 1 (GluRIA).